The chain runs to 81 residues: Costars family protein ABRACL (81 aa).

Residue methionine 1 is modified to N-acetylmethionine.

The protein belongs to the costars family.

This chain is Costars family protein ABRACL (ABRACL), found in Bos taurus (Bovine).